The following is a 73-amino-acid chain: UPF0346 protein Lreu_0775 (73 aa).

This sequence belongs to the UPF0346 family.

This Limosilactobacillus reuteri (strain DSM 20016) (Lactobacillus reuteri) protein is UPF0346 protein Lreu_0775.